A 472-amino-acid polypeptide reads, in one-letter code: Ribulose bisphosphate carboxylase large chain (472 aa).

The substrate site is built by N120 and T170. The Proton acceptor role is filled by K172. K174 contributes to the substrate binding site. 3 residues coordinate Mg(2+): K198, D200, and E201. K198 carries the N6-carboxylysine modification. H291 (proton acceptor) is an active-site residue. Substrate contacts are provided by R292, H324, and S376. Positions 461 to 467 (EIKFEFE) match the Interacts with RbcX2 motif.

It belongs to the RuBisCO large chain family. Type I subfamily. As to quaternary structure, heterohexadecamer of 8 large chains and 8 small chains; disulfide-linked. The disulfide link is formed within the large subunit homodimers. The exposed C-terminus binds in a cleft in the RbcX2 (shown with endogenous and Anabaena strain CA protein). RbcX2 is displaced by RbcS; as RbcX2 is removed RbcS mediates the ordering of an internal RbcL loop (Thr-64-Leu-70) in a catalytically active conformation. Requires Mg(2+) as cofactor. In terms of processing, the disulfide bond which can form in the large chain dimeric partners within the hexadecamer appears to be associated with oxidative stress and protein turnover.

It localises to the carboxysome. It carries out the reaction 2 (2R)-3-phosphoglycerate + 2 H(+) = D-ribulose 1,5-bisphosphate + CO2 + H2O. The enzyme catalyses D-ribulose 1,5-bisphosphate + O2 = 2-phosphoglycolate + (2R)-3-phosphoglycerate + 2 H(+). RuBisCO catalyzes two reactions: the carboxylation of D-ribulose 1,5-bisphosphate, the primary event in carbon dioxide fixation, as well as the oxidative fragmentation of the pentose substrate in the photorespiration process. Both reactions occur simultaneously and in competition at the same active site. The sequence is that of Ribulose bisphosphate carboxylase large chain (cbbL) from Synechococcus sp. (strain ATCC 27144 / PCC 6301 / SAUG 1402/1) (Anacystis nidulans).